Consider the following 356-residue polypeptide: Ubiquitin-conjugating enzyme E2 Z (356 aa).

The span at 1 to 16 shows a compositional bias: low complexity; sequence MAESPTEEAATATAGA. The disordered stretch occupies residues 1–22; sequence MAESPTEEAATATAGAGAAGPG. The UBC core domain occupies 101-255; sequence QCLLRIKRDI…IRHETIRVAV (155 aa). C190 functions as the Glycyl thioester intermediate in the catalytic mechanism. The tract at residues 334–356 is disordered; that stretch reads NAEMDSDSSSSGTETDLHGSLRV. S339 is subject to Phosphoserine.

It belongs to the ubiquitin-conjugating enzyme family.

It is found in the cytoplasm. It localises to the nucleus. The enzyme catalyses S-ubiquitinyl-[E1 ubiquitin-activating enzyme]-L-cysteine + [E2 ubiquitin-conjugating enzyme]-L-cysteine = [E1 ubiquitin-activating enzyme]-L-cysteine + S-ubiquitinyl-[E2 ubiquitin-conjugating enzyme]-L-cysteine.. The protein operates within protein modification; protein ubiquitination. Its function is as follows. Catalyzes the covalent attachment of ubiquitin to other proteins. Specific substrate for UBA6, not charged with ubiquitin by UBE1. May be involved in apoptosis regulation. The polypeptide is Ubiquitin-conjugating enzyme E2 Z (Ube2z) (Rattus norvegicus (Rat)).